We begin with the raw amino-acid sequence, 167 residues long: Phosphopantetheine adenylyltransferase (167 aa).

Residue S10 coordinates substrate. Residues 10–11 (SF) and H18 contribute to the ATP site. K42, A79, and R93 together coordinate substrate. ATP-binding positions include 94-96 (GLR), E104, and 129-135 (VGHITAT).

It belongs to the bacterial CoaD family. Homohexamer. Requires Mg(2+) as cofactor.

It localises to the cytoplasm. The catalysed reaction is (R)-4'-phosphopantetheine + ATP + H(+) = 3'-dephospho-CoA + diphosphate. Its pathway is cofactor biosynthesis; coenzyme A biosynthesis; CoA from (R)-pantothenate: step 4/5. Reversibly transfers an adenylyl group from ATP to 4'-phosphopantetheine, yielding dephospho-CoA (dPCoA) and pyrophosphate. The chain is Phosphopantetheine adenylyltransferase from Methylocella silvestris (strain DSM 15510 / CIP 108128 / LMG 27833 / NCIMB 13906 / BL2).